Reading from the N-terminus, the 340-residue chain is Peroxisomal adenine nucleotide transporter 1 (340 aa).

Solcar repeat units follow at residues 4 to 119, 133 to 218, and 236 to 320; these read ENAV…VRKH, FSTP…LREA, and LSPG…LTKM. A run of 6 helical transmembrane segments spans residues 6 to 26, 96 to 116, 139 to 159, 190 to 210, 242 to 262, and 293 to 313; these read AVIG…LDLA, GSST…YTLV, LVLG…INVV, GFWA…ITYA, FVMG…LIIA, and WKGL…LFMF.

This sequence belongs to the mitochondrial carrier (TC 2.A.29) family.

It localises to the peroxisome membrane. Adenine nucleotide transporter involved in the uniport of ATP and adenine nucleotide hetero-exchange transport between the cytosol and the peroxisomal lumen. This transport is accompanied by a proton transport from the peroxisomal lumen to the cytosol. Transport of ATP into the peroxisome is required for beta-oxidation of medium-chain fatty acids. This Eremothecium gossypii (strain ATCC 10895 / CBS 109.51 / FGSC 9923 / NRRL Y-1056) (Yeast) protein is Peroxisomal adenine nucleotide transporter 1 (ANT1).